The sequence spans 252 residues: NAC domain-containing protein 23 (252 aa).

Positions 12–177 (MPPGFRFQPT…EMVLCRISNK (166 aa)) constitute an NAC domain. The DNA-binding element occupies 110–183 (TAVKRRFVFY…ISNKDLPKPP (74 aa)). The segment at 225-252 (VDDAAAGTDDPGDLDEEIDDSMQRNHGG) is disordered. Over residues 234 to 244 (DPGDLDEEIDD) the composition is skewed to acidic residues.

Forms heterodimers with NAC26. In terms of tissue distribution, expressed in stems and panicles. Expressed in developing endosperm.

The protein localises to the nucleus. It localises to the cytoplasm. Functionally, transcription factor involved in the regulation of seed size. Binds to DNA-specific sequences of CLPD1 and OAT promoters in vitro. The chain is NAC domain-containing protein 23 from Oryza sativa subsp. japonica (Rice).